Here is a 678-residue protein sequence, read N- to C-terminus: ATP-dependent RNA helicase DHX58 (678 aa).

In terms of domain architecture, Helicase ATP-binding spans 11 to 188; that stretch reads ILPALEGKNI…QGAIDHILQL (178 aa). 24 to 31 is a binding site for ATP; sequence LPTGAGKT. Positions 131–134 match the DECH box motif; that stretch reads DECH. Residues 353–514 enclose the Helicase C-terminal domain; the sequence is MLERILLKQF…KAVAAVQKMD (162 aa). Residues 489 to 546 adopt a coiled-coil conformation; sequence EMKRELTNEALEVLMEKAVAAVQKMDPDEFKAKIRDLQQASLVKRAARAAHREIQQGQ. Residues 542-669 enclose the RLR CTR domain; that stretch reads IQQGQFLPEH…PVFDILQDCT (128 aa). Zn(2+) is bound by residues C556, C559, C612, and C615. Positions 572–655 are RNA-binding; the sequence is VEGTHHVNVN…KIQAKKWSRV (84 aa).

This sequence belongs to the helicase family. RLR subfamily. As to quaternary structure, monomer in the absence of dsRNA. Homodimer in the presence of dsRNA. Interacts with RIGI (via CARD domain), MAVS/IPS1 and DDX60. Found in a complex with RIGI and IFIH1/MDA5. Interacts with ANKRD17. Directly interacts with ATG5 and ATG12, either as ATG5 and ATG12 monomers or as ATG12-ATG5 conjugates. As to expression, highly expressed in mammary tissues. Expressed in liver and testis. Expressed at lower level in spleen, embryo, mammary gland and breast tumors.

It is found in the cytoplasm. The enzyme catalyses ATP + H2O = ADP + phosphate + H(+). Its function is as follows. Acts as a regulator of RIGI and IFIH1/MDA5 mediated antiviral signaling. Cannot initiate antiviral signaling as it lacks the CARD domain required for activating MAVS/IPS1-dependent signaling events. Can have both negative and positive regulatory functions related to RIGI and IFIH1/MDA5 signaling and this role in regulating signaling may be complex and could probably depend on characteristics of the infecting virus or target cells, or both. Its inhibitory action on RIG-I signaling may involve the following mechanisms: competition with RIGI for binding to the viral RNA, binding to RIGI and inhibiting its dimerization and interaction with MAVS/IPS1, competing with IKBKE in its binding to MAVS/IPS1 thereby inhibiting activation of interferon regulatory factor 3 (IRF3). Its positive regulatory role may involve unwinding or stripping nucleoproteins of viral RNA thereby facilitating their recognition by RIGI and IFIH1/MDA5. Involved in the innate immune response to various RNA viruses and some DNA viruses such as poxviruses, and also to the bacterial pathogen Listeria monocytogenes. Can bind both ssRNA and dsRNA, with a higher affinity for dsRNA. Shows a preference to 5'-triphosphorylated RNA, although it can recognize RNA lacking a 5'-triphosphate. The polypeptide is ATP-dependent RNA helicase DHX58 (Mus musculus (Mouse)).